The following is a 214-amino-acid chain: NADH-quinone oxidoreductase subunit C (214 aa).

It belongs to the complex I 30 kDa subunit family. NDH-1 is composed of 14 different subunits. Subunits NuoB, C, D, E, F, and G constitute the peripheral sector of the complex.

Its subcellular location is the cell inner membrane. It carries out the reaction a quinone + NADH + 5 H(+)(in) = a quinol + NAD(+) + 4 H(+)(out). NDH-1 shuttles electrons from NADH, via FMN and iron-sulfur (Fe-S) centers, to quinones in the respiratory chain. The immediate electron acceptor for the enzyme in this species is believed to be ubiquinone. Couples the redox reaction to proton translocation (for every two electrons transferred, four hydrogen ions are translocated across the cytoplasmic membrane), and thus conserves the redox energy in a proton gradient. The polypeptide is NADH-quinone oxidoreductase subunit C (Francisella tularensis subsp. novicida (strain U112)).